A 348-amino-acid chain; its full sequence is Methylthioribose-1-phosphate isomerase (348 aa).

Substrate contacts are provided by residues 47–49 (RGA), Arg90, and Gln196. Catalysis depends on Asp237, which acts as the Proton donor. 247–248 (NK) lines the substrate pocket.

It belongs to the eIF-2B alpha/beta/delta subunits family. MtnA subfamily.

It catalyses the reaction 5-(methylsulfanyl)-alpha-D-ribose 1-phosphate = 5-(methylsulfanyl)-D-ribulose 1-phosphate. The protein operates within amino-acid biosynthesis; L-methionine biosynthesis via salvage pathway; L-methionine from S-methyl-5-thio-alpha-D-ribose 1-phosphate: step 1/6. Its function is as follows. Catalyzes the interconversion of methylthioribose-1-phosphate (MTR-1-P) into methylthioribulose-1-phosphate (MTRu-1-P). The chain is Methylthioribose-1-phosphate isomerase from Synechococcus sp. (strain ATCC 27144 / PCC 6301 / SAUG 1402/1) (Anacystis nidulans).